The primary structure comprises 955 residues: B3 domain-containing protein Os07g0563300 (955 aa).

Pro residues-rich tracts occupy residues 1-20 (MSSP…PPPS) and 29-45 (VQPP…PQQP). Disordered regions lie at residues 1–81 (MSSP…QRPR) and 325–392 (ARKG…SSSL). Residues 62–71 (QHQQQQQGPP) are compositionally biased toward low complexity. Polar residues predominate over residues 332 to 342 (DPCSSVSTTFK). Positions 343–355 (LDSHHPSILKDDP) are enriched in basic and acidic residues. Positions 382–392 (QQQQQMASSSL) are enriched in low complexity. Residues 453–554 (FEKMLSASDA…KLVMGFRKAT (102 aa)) constitute a DNA-binding region (TF-B3). 2 stretches are compositionally biased toward polar residues: residues 556-565 (LSAEQDQPTK) and 598-608 (NTESKSSSPVE). Residues 556-642 (LSAEQDQPTK…PLPVKRKATS (87 aa)) form a disordered region. Residues 708–758 (SGENHQWAQCEDCSKWRKLPVDALLPSKWTCSDNKWDSERSSCDSAQEINM) form a CW-type zinc finger. Residues cysteine 717, cysteine 720, cysteine 738, and cysteine 750 each coordinate Zn(2+). The disordered stretch occupies residues 856-955 (MMRREKRQQS…ATRLLRDNPT (100 aa)). Positions 862-877 (RQQSEKDSGVPRKREP) are enriched in basic and acidic residues. Composition is skewed to polar residues over residues 878–900 (GQSS…SSPH) and 920–933 (TSSP…LNSQ). The span at 939–955 (EQSPKSDATRLLRDNPT) shows a compositional bias: basic and acidic residues.

The protein resides in the nucleus. This chain is B3 domain-containing protein Os07g0563300, found in Oryza sativa subsp. japonica (Rice).